Here is a 761-residue protein sequence, read N- to C-terminus: Protein PHTF1 (761 aa).

Residues 6-150 (RDAISWYQKK…VHCQIVSTQI (145 aa)) enclose the PHTF domain. 3 helical membrane-spanning segments follow: residues 77 to 97 (GLVRVVFFPLFSSWWIQVTSL), 99 to 119 (IFVWLLLLYLMQVTAVVLYLL), and 121 to 141 (PIVSASEVLGPLCLMLLMGTV). Residues 152 to 184 (RPSGNNGNRRRRKLRKTVNGDGSRDNGNNSPDK) form a disordered region. The segment covering 170–181 (NGDGSRDNGNNS) has biased composition (low complexity). 2 N-linked (GlcNAc...) asparagine glycosylation sites follow: asparagine 179 and asparagine 224. Serine 272, serine 276, serine 277, serine 333, and serine 335 each carry phosphoserine. The disordered stretch occupies residues 345–414 (VFSQGSRSGM…NTIHSGTKRD (70 aa)). The span at 347–363 (SQGSRSGMSGGSRSLNL) shows a compositional bias: low complexity. A glycan (N-linked (GlcNAc...) asparagine) is linked at asparagine 362. Over residues 364-375 (SRRDSESTRHDS) the composition is skewed to basic and acidic residues. An N-linked (GlcNAc...) asparagine glycan is attached at asparagine 430. Helical transmembrane passes span 472 to 492 (GVGYQMLGNAVTVGLALFPFL), 514 to 534 (TLFCGAPPVTPVVILSIINFI), 610 to 630 (VVVSSVFLLTLSIAFICCAQV), and 644 to 664 (WEFLIWETALLLFLLRLASLG). Asparagine 673 and asparagine 732 each carry an N-linked (GlcNAc...) asparagine glycan. Residues 736–756 (VVILSAVSGVISDLLGFNIRL) traverse the membrane as a helical segment.

In terms of assembly, interacts with FEM1B. As to expression, widely expressed with highest levels in testis.

The protein resides in the endoplasmic reticulum membrane. It localises to the golgi apparatus. Its subcellular location is the cis-Golgi network membrane. This Mus musculus (Mouse) protein is Protein PHTF1.